The chain runs to 193 residues: Adenine phosphoribosyltransferase (193 aa).

It belongs to the purine/pyrimidine phosphoribosyltransferase family. In terms of assembly, homodimer.

The protein localises to the cytoplasm. The catalysed reaction is AMP + diphosphate = 5-phospho-alpha-D-ribose 1-diphosphate + adenine. The protein operates within purine metabolism; AMP biosynthesis via salvage pathway; AMP from adenine: step 1/1. Its function is as follows. Catalyzes a salvage reaction resulting in the formation of AMP, that is energically less costly than de novo synthesis. The sequence is that of Adenine phosphoribosyltransferase from Bifidobacterium longum (strain NCC 2705).